We begin with the raw amino-acid sequence, 318 residues long: Methionyl-tRNA formyltransferase (318 aa).

114–117 (SVLP) is a binding site for (6S)-5,6,7,8-tetrahydrofolate.

The protein belongs to the Fmt family.

It carries out the reaction L-methionyl-tRNA(fMet) + (6R)-10-formyltetrahydrofolate = N-formyl-L-methionyl-tRNA(fMet) + (6S)-5,6,7,8-tetrahydrofolate + H(+). In terms of biological role, attaches a formyl group to the free amino group of methionyl-tRNA(fMet). The formyl group appears to play a dual role in the initiator identity of N-formylmethionyl-tRNA by promoting its recognition by IF2 and preventing the misappropriation of this tRNA by the elongation apparatus. This chain is Methionyl-tRNA formyltransferase, found in Bdellovibrio bacteriovorus (strain ATCC 15356 / DSM 50701 / NCIMB 9529 / HD100).